The following is a 4814-amino-acid chain: Nonribosomal peptide synthetase SIDC (4814 aa).

The tract at residues Pro-21 to Ala-453 is adenylation 1. The Carrier 1 domain occupies Asp-528–Asp-601. Residue Ser-562 is modified to O-(pantetheine 4'-phosphoryl)serine. The segment at Val-637–Glu-1045 is condensation 1. Positions Thr-1101–Val-1488 are adenylation 2. Carrier domains follow at residues Glu-1589–His-1666 and Ser-2134–Gly-2210. O-(pantetheine 4'-phosphoryl)serine is present on residues Ser-1626 and Ser-2171. 2 condensation regions span residues Leu-1706–Gly-2210 and Leu-2243–Asp-2649. Residues Thr-2709 to Val-3100 are adenylation 3. In terms of domain architecture, Carrier 4 spans Ser-3203–Ser-3280. The residue at position 3240 (Ser-3240) is an O-(pantetheine 4'-phosphoryl)serine. A condensation 4 region spans residues Tyr-3319 to Ala-3732. The region spanning Glu-3747–Thr-3823 is the Carrier 5 domain. Residue Ser-3784 is modified to O-(pantetheine 4'-phosphoryl)serine. Residues Asp-3857–Val-4258 form a condensation 5 region. A Carrier 6 domain is found at Asn-4295 to Gly-4368. Position 4329 is an O-(pantetheine 4'-phosphoryl)serine (Ser-4329). The segment at Glu-4504–Asp-4686 is condensation 6.

The protein belongs to the NRP synthetase family. Requires pantetheine 4'-phosphate as cofactor.

The protein operates within siderophore biosynthesis. In terms of biological role, nonribosomal peptide synthetase; part of the gene cluster that mediates the biosynthesis of at least 11 siderophores, including beauverichelin A, dimerumic acid (DA), Na-dimethyl coprogen (NADC), eleutherazine B, ferricrocin (FC), fusarinine A, fusarinine C (FsC), metachelin A, mevalonolactone, rhodotorulic acid (RA) and tenellin. This cocktail of siderophores for iron metabolism is essential for virulence, and more specifically for the fungal virulence in penetrating through the host cuticle. Siderophore synthesis is also involved in conidial germination under iron-deficient conditions. SIDC catalyzes the assembly of ferricrocin whereas SIDD catalyzes the assembly of fusarinine C. The polypeptide is Nonribosomal peptide synthetase SIDC (Beauveria bassiana (strain ARSEF 2860) (White muscardine disease fungus)).